Consider the following 428-residue polypeptide: Histidine--tRNA ligase (428 aa).

It belongs to the class-II aminoacyl-tRNA synthetase family. As to quaternary structure, homodimer.

Its subcellular location is the cytoplasm. It catalyses the reaction tRNA(His) + L-histidine + ATP = L-histidyl-tRNA(His) + AMP + diphosphate + H(+). This chain is Histidine--tRNA ligase, found in Lactobacillus delbrueckii subsp. bulgaricus (strain ATCC BAA-365 / Lb-18).